The chain runs to 78 residues: Large ribosomal subunit protein bL28 (78 aa).

It belongs to the bacterial ribosomal protein bL28 family.

The protein is Large ribosomal subunit protein bL28 of Psychrobacter sp. (strain PRwf-1).